The primary structure comprises 163 residues: Nucleotide-binding protein KPN78578_03700 (163 aa).

This sequence belongs to the YajQ family.

In terms of biological role, nucleotide-binding protein. The polypeptide is Nucleotide-binding protein KPN78578_03700 (Klebsiella pneumoniae subsp. pneumoniae (strain ATCC 700721 / MGH 78578)).